The sequence spans 141 residues: Hemoglobin subunit alpha-1 (141 aa).

The 141-residue stretch at 1-141 folds into the Globin domain; sequence VLSPEDKNNV…VSTVLTSKYR (141 aa). His58 serves as a coordination point for O2. His87 serves as a coordination point for heme b.

Belongs to the globin family. Heterotetramer of two alpha chains and two beta chains. In terms of tissue distribution, red blood cells.

Functionally, involved in oxygen transport from the lung to the various peripheral tissues. In Tadarida brasiliensis (Brazilian free-tailed bat), this protein is Hemoglobin subunit alpha-1.